Consider the following 265-residue polypeptide: Phosphatidylserine decarboxylase proenzyme (265 aa).

The active-site Schiff-base intermediate with substrate; via pyruvic acid is Ser-183. Ser-183 is modified (pyruvic acid (Ser); by autocatalysis). The interval 216 to 246 (TAPQTESEPESEPALQTAPVETAANPSAEQR) is disordered.

The protein belongs to the phosphatidylserine decarboxylase family. PSD-A subfamily. As to quaternary structure, heterodimer of a large membrane-associated beta subunit and a small pyruvoyl-containing alpha subunit. Pyruvate serves as cofactor. Post-translationally, is synthesized initially as an inactive proenzyme. Formation of the active enzyme involves a self-maturation process in which the active site pyruvoyl group is generated from an internal serine residue via an autocatalytic post-translational modification. Two non-identical subunits are generated from the proenzyme in this reaction, and the pyruvate is formed at the N-terminus of the alpha chain, which is derived from the carboxyl end of the proenzyme. The post-translation cleavage follows an unusual pathway, termed non-hydrolytic serinolysis, in which the side chain hydroxyl group of the serine supplies its oxygen atom to form the C-terminus of the beta chain, while the remainder of the serine residue undergoes an oxidative deamination to produce ammonia and the pyruvoyl prosthetic group on the alpha chain.

The protein localises to the cell membrane. The catalysed reaction is a 1,2-diacyl-sn-glycero-3-phospho-L-serine + H(+) = a 1,2-diacyl-sn-glycero-3-phosphoethanolamine + CO2. It functions in the pathway phospholipid metabolism; phosphatidylethanolamine biosynthesis; phosphatidylethanolamine from CDP-diacylglycerol: step 2/2. In terms of biological role, catalyzes the formation of phosphatidylethanolamine (PtdEtn) from phosphatidylserine (PtdSer). In Neisseria meningitidis serogroup B (strain ATCC BAA-335 / MC58), this protein is Phosphatidylserine decarboxylase proenzyme.